Consider the following 348-residue polypeptide: Glucan endo-1,3-beta-glucosidase, basic isoform (348 aa).

The residue at position 1 (glutamine 1) is a Pyrrolidone carboxylic acid. Catalysis depends on glutamate 95, which acts as the Proton donor. Glutamate 240 functions as the Nucleophile in the catalytic mechanism. Residues 317–348 (AQRMQRLLLMSSMQHIPLRVTCKLEPSSQSLL) constitute a propeptide, removed in mature form.

Belongs to the glycosyl hydrolase 17 family.

The protein resides in the vacuole. The catalysed reaction is Hydrolysis of (1-&gt;3)-beta-D-glucosidic linkages in (1-&gt;3)-beta-D-glucans.. In terms of biological role, implicated in the defense of plants against pathogens. This Phaseolus vulgaris (Kidney bean) protein is Glucan endo-1,3-beta-glucosidase, basic isoform.